Reading from the N-terminus, the 165-residue chain is 6,7-dimethyl-8-ribityllumazine synthase 2 (165 aa).

5-amino-6-(D-ribitylamino)uracil is bound by residues Trp-24, 56-58 (SFE), and 80-82 (LVV). The active-site Proton donor is the Arg-88. Ser-113 serves as a coordination point for 5-amino-6-(D-ribitylamino)uracil. A (2S)-2-hydroxy-3-oxobutyl phosphate-binding site is contributed by His-127.

This sequence belongs to the DMRL synthase family.

The catalysed reaction is (2S)-2-hydroxy-3-oxobutyl phosphate + 5-amino-6-(D-ribitylamino)uracil = 6,7-dimethyl-8-(1-D-ribityl)lumazine + phosphate + 2 H2O + H(+). It functions in the pathway cofactor biosynthesis; riboflavin biosynthesis; riboflavin from 2-hydroxy-3-oxobutyl phosphate and 5-amino-6-(D-ribitylamino)uracil: step 1/2. Catalyzes the formation of 6,7-dimethyl-8-ribityllumazine by condensation of 5-amino-6-(D-ribitylamino)uracil with 3,4-dihydroxy-2-butanone 4-phosphate. This is the penultimate step in the biosynthesis of riboflavin. In Bradyrhizobium diazoefficiens (strain JCM 10833 / BCRC 13528 / IAM 13628 / NBRC 14792 / USDA 110), this protein is 6,7-dimethyl-8-ribityllumazine synthase 2.